A 233-amino-acid chain; its full sequence is Large ribosomal subunit protein uL1 (233 aa).

Belongs to the universal ribosomal protein uL1 family. Part of the 50S ribosomal subunit.

Functionally, binds directly to 23S rRNA. The L1 stalk is quite mobile in the ribosome, and is involved in E site tRNA release. In terms of biological role, protein L1 is also a translational repressor protein, it controls the translation of the L11 operon by binding to its mRNA. The sequence is that of Large ribosomal subunit protein uL1 from Shewanella frigidimarina (strain NCIMB 400).